The sequence spans 1218 residues: NACHT, LRR and PYD domains-containing protein 1a allele 4 (1218 aa).

The span at 1-29 (MGESQSKQESNTRVAQHGSQQDVDPTFQT) shows a compositional bias: polar residues. Disordered stretches follow at residues 1-44 (MGES…QVEQ) and 71-91 (EMDH…DRSE). The span at 77–87 (RRHSHQSKKKL) shows a compositional bias: basic residues. The 310-residue stretch at 175–484 (QLVIIEGAAG…EFFAAMSYIL (310 aa)) folds into the NACHT domain. Residue 181-188 (GAAGIGKS) participates in ATP binding. LRR repeat units follow at residues 343-364 (KERN…LTLC), 673-693 (NLEE…RSLC), and 730-750 (RLAE…RQLC). Over residues 799-815 (TMPTENTDGEESLTSSK) the composition is skewed to polar residues. A disordered region spans residues 799 to 842 (TMPTENTDGEESLTSSKQQQQQSGDKHMEPLGTDDDFWGPSGPV). Residues 835–968 (FWGPSGPVST…HFAVLENPSF (134 aa)) are ZU5. The FIIND domain occupies 835-1118 (FWGPSGPVST…LRPALPRMAS (284 aa)). The segment at 969–1118 (SPMGVLLRMI…LRPALPRMAS (150 aa)) is UPA. The region spanning 1122–1211 (DAPALLHFVD…HLIMDLLEKS (90 aa)) is the CARD domain.

This sequence belongs to the NLRP family. In terms of assembly, interacts (via LRR repeats) with BCL2 and BCL2L1 (via the loop between motifs BH4 and BH3). Interacts with NOD2; this interaction is enhanced in the presence of muramyl dipeptide (MDP) and increases IL1B release. Interacts with EIF2AK2/PKR; this interaction requires EIF2AK2 activity, is accompanied by EIF2AK2 autophosphorylation and promotes inflammasome assembly in response to danger-associated signals. Interacts with MEFV; this interaction targets Nlrp1a to degradation by autophagy, hence preventing excessive IL1B- and IL18-mediated inflammation. Interacts with DPP9; leading to inhibit activation of the inflammasome. DPP9 acts via formation of a ternary complex, composed of a DPP9 homodimer, one full-length NLRP1 protein, and one cleaved C-terminus of Nlrp1a (NACHT, LRR and PYD domains-containing protein 1a, C-terminus). Interacts with DPP8; leading to inhibit activation of the inflammasome, probably via formation of a ternary complex with DPP8. Interacts with the C-terminal part of Nlrp1a (NACHT, LRR and PYD domains-containing protein 1a, C-terminus) in absence of pathogens and other damage-associated signals. As to quaternary structure, interacts with the N-terminal part of Nlrp1a (NACHT, LRR and PYD domains-containing protein 1a, N-terminus) in absence of pathogens and other damage-associated signals. Homomultimer; forms the Nlrp1a inflammasome polymeric complex, a filament composed of homopolymers of this form in response to pathogens and other damage-associated signals. The Nlrp1a inflammasome polymeric complex directly recruits pro-caspase-1 (proCASP1) independently of PYCARD/ASC. Interacts (via CARD domain) with CASP1 (via CARD domain); leading to CASP1 activation. Post-translationally, autocatalytically cleaved. Autocatalytic cleavage in FIIND region occurs constitutively, prior to activation signals, and is required for inflammasome activity (IL1B release), possibly by facilitating CASP1 binding. Both N- and C-terminal parts remain associated non-covalently. Ubiquitinated in response to pathogen-associated signals, leading to its degradation by the proteasome and subsequent release of the cleaved C-terminal part of the protein (NACHT, LRR and PYD domains-containing protein 1a, C-terminus), which polymerizes and forms the Nlrp1a inflammasome.

It localises to the cytoplasm. The protein localises to the cytosol. It is found in the nucleus. Its subcellular location is the inflammasome. With respect to regulation, activated by pathogens and other damage-associated signals: activation promotes ubiquitination and degradation of the N-terminal part, releasing the cleaved C-terminal part of the protein (NACHT, LRR and PYD domains-containing protein 1a, C-terminus), which polymerizes and forms the Nlrp1a inflammasome. Nlrp1a inflammasome is inhibited by DPP8 and DPP9, which sequester the C-terminal fragment of Nlrp1a (NACHT, LRR and PYD domains-containing protein 1a, C-terminus) in a ternary complex, thereby preventing Nlrp1a oligomerization and activation. Nlrp1a inflammasome is strongly activated by Val-boroPro (Talabostat, PT-100), an inhibitor of dipeptidyl peptidases DPP8 and DPP9. Val-boroPro relieves inhibition of DPP8 and/or DPP9 by promoting disruption of the ternary complex, releasing its C-terminal part from autoinhibition. Not activated by cleavage by B.anthracis lethal toxin (LT) endopeptidase. Functionally, acts as the sensor component of the Nlrp1a inflammasome, which mediates inflammasome activation in response to various pathogen-associated signals, leading to subsequent pyroptosis. Inflammasomes are supramolecular complexes that assemble in the cytosol in response to pathogens and other damage-associated signals and play critical roles in innate immunity and inflammation. Acts as a recognition receptor (PRR): recognizes specific pathogens and other damage-associated signals, such as Val-boroPro inhibitor, and mediates the formation of the inflammasome polymeric complex. In response to pathogen-associated signals, the N-terminal part of Nlrp1a is degraded by the proteasome, releasing the cleaved C-terminal part of the protein (NACHT, LRR and PYD domains-containing protein 1a, C-terminus), which polymerizes to initiate the formation of the inflammasome complex: the inflammasome directly recruits pro-caspase-1 (proCASP1) independently of PYCARD/ASC and promotes caspase-1 (CASP1) activation, which subsequently cleaves and activates inflammatory cytokines IL1B and IL18 and gasdermin-D (GSDMD), leading to pyroptosis. In the absence of GSDMD expression, the Nlrp1a inflammasome is able to recruit and activate CASP8, leading to activation of gasdermin-E (GSDME). Constitutes the precursor of the Nlrp1a inflammasome, which mediates autoproteolytic processing within the FIIND domain to generate the N-terminal and C-terminal parts, which are associated non-covalently in absence of pathogens and other damage-associated signals. In terms of biological role, regulatory part that prevents formation of the Nlrp1a inflammasome: in absence of pathogens and other damage-associated signals, interacts with the C-terminal part of Nlrp1a (NACHT, LRR and PYD domains-containing protein 1a, C-terminus), preventing activation of the Nlrp1a inflammasome. In response to pathogen-associated signals, this part is ubiquitinated by the N-end rule pathway and degraded by the proteasome, releasing the cleaved C-terminal part of the protein, which polymerizes and forms the Nlrp1a inflammasome. Its function is as follows. Constitutes the active part of the Nlrp1a inflammasome. In absence of pathogens and other damage-associated signals, interacts with the N-terminal part of Nlrp1a (NACHT, LRR and PYD domains-containing protein 1a, N-terminus), preventing activation of the Nlrp1a inflammasome. In response to pathogen-associated signals, the N-terminal part of Nlrp1a is degraded by the proteasome, releasing this form, which polymerizes to form the Nlrp1a inflammasome complex: the Nlrp1a inflammasome complex then directly recruits pro-caspase-1 (proCASP1) and promotes caspase-1 (CASP1) activation, leading to gasdermin-D (GSDMD) cleavage and subsequent pyroptosis. The protein is NACHT, LRR and PYD domains-containing protein 1a allele 4 of Rattus norvegicus (Rat).